Consider the following 532-residue polypeptide: Omega-hydroxyceramide transacylase (532 aa).

The 170-residue stretch at 16 to 185 (ISFSGSGFLS…TGMQPCAFWT (170 aa)) folds into the PNPLA domain. The short motif at 51–55 (GTSAG) is the GXSXG element. The active-site Nucleophile is Ser-53. Asp-172 acts as the Proton acceptor in catalysis. Residues 172–174 (DGG) carry the DGA/G motif. Disordered regions lie at residues 290-457 (PERS…ELGQ) and 489-532 (VTES…SKVQ). Over residues 310–322 (PHKEWVPKGDGRG) the composition is skewed to basic and acidic residues. Low complexity-rich tracts occupy residues 380–389 (PPSSTPGSSL) and 397–411 (SPLS…SGSP). The segment covering 517-532 (GFPRHSGSKKPSSKVQ) has biased composition (basic residues).

As to expression, expressed in the digestive system. Expressed in the epidermis of skin keratinocytes. Strongly expressed in the granular layer. Expressed in the upper epidermis and eccrine sweat glands of the dermis and in the region of keratin filament bundles, which is more pronounced in upper epidermal layers and in the lower cornified layers.

The protein localises to the cytoplasm. The catalysed reaction is an N-(omega-hydroxy-ultra-long chain fatty acyl)-sphingoid base + a (9Z,12Z)-octadecadienoyl-containing triacyl-sn-glycerol = an N-[omega-(9Z,12Z-octadecadienoyloxy)-O-ultra-long chain fatty acyl]-sphingoid base + a diacylglycerol. It carries out the reaction an N-(omega-hydroxy-ultra-long chain fatty acyl)-sphing-4-enine + a (9Z,12Z)-octadecadienoyl-containing triacyl-sn-glycerol = an N-(omega-(9Z,12Z-octadecadienoyloxy)-ultra-long chain fatty acyl)-sphing-4-enine + a diacylglycerol. It catalyses the reaction N-(30-hydroxytriacontanoyl)-sphing-4-enine + 1,2,3-tri-(9Z,12Z)-octadecadienoylglycerol = N-[30-(9Z,12Z-octadecadienoyloxy)-triacontanoyl]-sphing-4-enine + di-(9Z,12Z)-octadecadienoylglycerol. The enzyme catalyses N-(28-hydroxyoctacosanoyl)-sphing-4-enine + a (9Z,12Z)-octadecadienoyl-containing triacyl-sn-glycerol = N-(28-(9Z,12Z-octadecadienoyloxy)-octacosanoyl)-sphing-4-enine + a diacylglycerol. The catalysed reaction is N-(32-hydroxydotriacontanoyl)-sphing-4-enine + a (9Z,12Z)-octadecadienoyl-containing triacyl-sn-glycerol = N-(32-(9Z,12Z-octadecadienoyloxy)-dotricontanoyl)-sphing-4-enine + a diacylglycerol. It carries out the reaction N-(32-hydroxydotriacontenoyl)-sphing-4-enine + a (9Z,12Z)-octadecadienoyl-containing triacyl-sn-glycerol = an N-(32-(9Z,12Z-octadecadienoyloxy)-dotriacontenoyl)-sphing-4-enine + a diacylglycerol. It catalyses the reaction an N-(34-hydroxytetratriacontenoyl)-sphing-4-enine + a (9Z,12Z)-octadecadienoyl-containing triacyl-sn-glycerol = an N-(34-(9Z,12Z-octadecadienoyloxy)-tetratriacontenoyl)-sphing-4-enine + a diacylglycerol. The enzyme catalyses an N-(34-hydroxytetratriacontadienoyl)-sphing-4-enine + a (9Z,12Z)-octadecadienoyl-containing triacyl-sn-glycerol = an N-(34-(9Z,12Z-octadecadienoyloxy)-tetratriacontadienoyl)-sphing-4-enine + a diacylglycerol. The catalysed reaction is an N-(36-hydroxyhexatriacontenoyl)-sphing-4-enine + a (9Z,12Z)-octadecadienoyl-containing triacyl-sn-glycerol = an N-(36-(9Z,12Z-octadecadienoyloxy)-hexatriacontenoyl)-sphing-4-enine + a diacylglycerol. It carries out the reaction an N-(36-hydroxyhexatriacontadienoyl)-sphing-4-enine + a (9Z,12Z)-octadecadienoyl-containing triacyl-sn-glycerol = an N-(36-(9Z,12Z-octadecadienoyloxy)-hexatriacontadienoyl)-sphing-4-enine + a diacylglycerol. It catalyses the reaction an N-(38-hydroxyoctatriacontenoyl)-sphing-4-enine + a (9Z,12Z)-octadecadienoyl-containing triacyl-sn-glycerol = an N-(38-(9Z,12Z-octadecadienoyloxy)-octatriacontenoyl)-sphing-4-enine + a diacylglycerol. Its function is as follows. Omega-hydroxyceramide transacylase involved in the synthesis of omega-O-acylceramides (esterified omega-hydroxyacyl-sphingosine; EOS), which are extremely hydrophobic lipids involved in skin barrier formation. Catalyzes the last step of the synthesis of omega-O-acylceramides by transferring linoleic acid from triglycerides to an omega-hydroxyceramide. Omega-O-acylceramides, are required for the biogenesis of lipid lamellae in the stratum corneum and the formation of the cornified lipid envelope which are essential for the epidermis barrier function. These lipids also play a role in keratinocyte differentiation. May also act on omega-hydroxylated ultra-long chain fatty acids (omega-OH ULCFA) and acylglucosylceramides (GlcEOS). The polypeptide is Omega-hydroxyceramide transacylase (Homo sapiens (Human)).